The sequence spans 287 residues: Acetylglutamate kinase (287 aa).

Substrate contacts are provided by residues 64–65, Arg86, and Asn185; that span reads GG.

Belongs to the acetylglutamate kinase family. ArgB subfamily.

The protein localises to the cytoplasm. It catalyses the reaction N-acetyl-L-glutamate + ATP = N-acetyl-L-glutamyl 5-phosphate + ADP. It participates in amino-acid biosynthesis; L-arginine biosynthesis; N(2)-acetyl-L-ornithine from L-glutamate: step 2/4. In terms of biological role, catalyzes the ATP-dependent phosphorylation of N-acetyl-L-glutamate. The polypeptide is Acetylglutamate kinase (Hydrogenobaculum sp. (strain Y04AAS1)).